A 199-amino-acid chain; its full sequence is 3-isopropylmalate dehydratase small subunit (199 aa).

This sequence belongs to the LeuD family. LeuD type 1 subfamily. As to quaternary structure, heterodimer of LeuC and LeuD.

The catalysed reaction is (2R,3S)-3-isopropylmalate = (2S)-2-isopropylmalate. The protein operates within amino-acid biosynthesis; L-leucine biosynthesis; L-leucine from 3-methyl-2-oxobutanoate: step 2/4. Functionally, catalyzes the isomerization between 2-isopropylmalate and 3-isopropylmalate, via the formation of 2-isopropylmaleate. The protein is 3-isopropylmalate dehydratase small subunit of Aeromonas hydrophila subsp. hydrophila (strain ATCC 7966 / DSM 30187 / BCRC 13018 / CCUG 14551 / JCM 1027 / KCTC 2358 / NCIMB 9240 / NCTC 8049).